The chain runs to 175 residues: Peptide deformylase (175 aa).

Fe cation-binding residues include cysteine 96 and histidine 138. The active site involves glutamate 139. Histidine 142 is a Fe cation binding site.

The protein belongs to the polypeptide deformylase family. Fe(2+) is required as a cofactor.

It catalyses the reaction N-terminal N-formyl-L-methionyl-[peptide] + H2O = N-terminal L-methionyl-[peptide] + formate. Functionally, removes the formyl group from the N-terminal Met of newly synthesized proteins. Requires at least a dipeptide for an efficient rate of reaction. N-terminal L-methionine is a prerequisite for activity but the enzyme has broad specificity at other positions. The protein is Peptide deformylase of Rhodopseudomonas palustris (strain BisB5).